The primary structure comprises 404 residues: cAMP-dependent protein kinase regulatory subunit (404 aa).

Residues 14–144 (LTDHELLRIP…RLKTAIAGNF (131 aa)) form a dimerization and phosphorylation region. Ser-105 carries the phosphoserine modification. 3',5'-cyclic AMP contacts are provided by residues 145-276 (LFSH…EKFP), Glu-223, Arg-232, 277-398 (CCRH…GVEE), Glu-344, and Arg-353.

This sequence belongs to the cAMP-dependent kinase regulatory chain family. As to quaternary structure, tetramer, composed of 2 regulatory (R) and 2 catalytic (C) subunits. In the presence of cAMP it dissociates into 2 active monomeric C subunits and an R dimer.

CAMP-dependent protein kinase PKA regulatory subunit. This chain is cAMP-dependent protein kinase regulatory subunit (PKAR), found in Colletotrichum trifolii.